A 767-amino-acid chain; its full sequence is MAPDSGSFPEGPPLKLLPVDTRDRGTQRCRLGPTALRALGAHLGSAVKISLPDGGSCLCTAWPRRDGADGFVQLDPQCTSPGSAVGAPGSGGIINLNRLRLVPCPPLRSLAVWPELREQAGASGAPSPAAVLEAVQELLRNRPVSQGYVVAAPPGAPGPVAALHIVSGAPSPNPAGLVTPRTHISLSEVPPSEEEPQPEVPLGGLSEAADSLRELLRLPLRYPRALASLGLEVPRGVLLAGPPGVGKTQLVRAVARETGAELLAVSAPALQGARPGETEENVRRIFKRARELASRRPTLLFLDEVDALCPRRGGPHQAPESRVVAQVLTLLDGIGEDREVVVVGSTNRPDALDPALRRPGRFDREVVIGTPTLRQRKAILQVITSKMPISGQVDLNLLAEMTVGYVGADLTALCREAAMQALLHSEKNQDNPTIDETDFLEAFKKIQPSSFRSVIGVTDIKPVGWEQIGGLEDVKLKLKQSIEWPLKFPREFVRMGLTQPKGVLLYGPPGCAKTTLVRALATSCRCSFVSVSGADLFSPFVGDSEKILSQVFRQARANTPAIVFLDEIDSILGSRSISRTECNVQDRVLSVLLNELDGVGLKTIERRGSKSDQHGKCKQLEKNEELEFQEIFNSNVIVVAATNRPDVLDDALLRPGRLDKIIYIPPPDEKGRLSILKVCTKNTPMGPDVSLEKVAAETCFFSGADLGNLCKEAALLALQENGLEVTTVKQEHFLESLKTVKPSLSHKDLTLYKNLFQKKEFSILEDI.

Met-1 is subject to N-acetylmethionine. ATP is bound by residues 241 to 248 and 507 to 514; these read GPPGVGKT and GPPGCAKT.

The protein belongs to the AAA ATPase family. AFG2 subfamily. Part of the 55LCC heterohexameric ATPase complex composed at least of AIRIM, AFG2A, AFG2B and CINP. Associates with pre-60S ribosomal particles.

The protein localises to the cytoplasm. It localises to the cytoskeleton. Its subcellular location is the spindle. It is found in the nucleus. It carries out the reaction ATP + H2O = ADP + phosphate + H(+). In the context of 55LCC heterohexameric ATPase complex, the ATPase activity is stimulated by DNA binding and inhibited in presence of RNA. In terms of biological role, ATP-dependent chaperone part of the 55LCC heterohexameric ATPase complex which is chromatin-associated and promotes replisome proteostasis to maintain replication fork progression and genome stability. Required for replication fork progression, sister chromatid cohesion, and chromosome stability. The ATPase activity is specifically enhanced by replication fork DNA and is coupled to cysteine protease-dependent cleavage of replisome substrates in response to replication fork damage. Uses ATPase activity to process replisome substrates in S-phase, facilitating their proteolytic turnover from chromatin to ensure DNA replication and mitotic fidelity. Plays an essential role in the cytoplasmic maturation steps of pre-60S ribosomal particles by promoting the release of shuttling protein RSL24D1/RLP24 from the pre-ribosomal particles. The chain is ATPase family gene 2 protein homolog B (AFG2B) from Bos taurus (Bovine).